The following is a 456-amino-acid chain: Bifunctional protein GlmU (456 aa).

Residues 1 to 229 (MLNNAMSVVI…LSEVEGVNNR (229 aa)) form a pyrophosphorylase region. Residues 11-14 (LAAG), Lys25, Gln76, 81-82 (GT), 103-105 (YGD), Gly140, Glu154, Asn169, and Asn227 contribute to the UDP-N-acetyl-alpha-D-glucosamine site. Asp105 contributes to the Mg(2+) binding site. Asn227 provides a ligand contact to Mg(2+). The segment at 230–250 (LQLSRLERVYQSEQAEKLLLA) is linker. Positions 251-456 (GVMLRDPARF…EGWRRPVKKK (206 aa)) are N-acetyltransferase. Residues Arg333 and Lys351 each contribute to the UDP-N-acetyl-alpha-D-glucosamine site. Catalysis depends on His363, which acts as the Proton acceptor. Tyr366 and Asn377 together coordinate UDP-N-acetyl-alpha-D-glucosamine. Acetyl-CoA-binding positions include Ala380, 386–387 (NY), Ser405, Ala423, and Arg440.

It in the N-terminal section; belongs to the N-acetylglucosamine-1-phosphate uridyltransferase family. This sequence in the C-terminal section; belongs to the transferase hexapeptide repeat family. In terms of assembly, homotrimer. It depends on Mg(2+) as a cofactor.

Its subcellular location is the cytoplasm. It catalyses the reaction alpha-D-glucosamine 1-phosphate + acetyl-CoA = N-acetyl-alpha-D-glucosamine 1-phosphate + CoA + H(+). It carries out the reaction N-acetyl-alpha-D-glucosamine 1-phosphate + UTP + H(+) = UDP-N-acetyl-alpha-D-glucosamine + diphosphate. It participates in nucleotide-sugar biosynthesis; UDP-N-acetyl-alpha-D-glucosamine biosynthesis; N-acetyl-alpha-D-glucosamine 1-phosphate from alpha-D-glucosamine 6-phosphate (route II): step 2/2. It functions in the pathway nucleotide-sugar biosynthesis; UDP-N-acetyl-alpha-D-glucosamine biosynthesis; UDP-N-acetyl-alpha-D-glucosamine from N-acetyl-alpha-D-glucosamine 1-phosphate: step 1/1. The protein operates within bacterial outer membrane biogenesis; LPS lipid A biosynthesis. In terms of biological role, catalyzes the last two sequential reactions in the de novo biosynthetic pathway for UDP-N-acetylglucosamine (UDP-GlcNAc). The C-terminal domain catalyzes the transfer of acetyl group from acetyl coenzyme A to glucosamine-1-phosphate (GlcN-1-P) to produce N-acetylglucosamine-1-phosphate (GlcNAc-1-P), which is converted into UDP-GlcNAc by the transfer of uridine 5-monophosphate (from uridine 5-triphosphate), a reaction catalyzed by the N-terminal domain. The chain is Bifunctional protein GlmU from Shigella dysenteriae serotype 1 (strain Sd197).